Here is a 567-residue protein sequence, read N- to C-terminus: Delta(24)-sterol reductase (567 aa).

Residues 1–24 (MSDLEAPLRPKRKKIWVDYFVKFR) lie on the Lumenal side of the membrane. A helical; Signal-anchor membrane pass occupies residues 25 to 45 (WILVIFVVLPISFTLYFLTYL). The 187-residue stretch at 45–231 (LGDVRSEWKS…VAAEVKLIPI (187 aa)) folds into the FAD-binding PCMH-type domain. Residues 46-567 (GDVRSEWKSF…AYPEVDQPPD (522 aa)) lie on the Cytoplasmic side of the membrane. Positions 520–541 (CRRKYGAVGTFMSVYYKCKKGR) are interaction with calmodulin. Residues 548 to 567 (REAEQAHLDTAYPEVDQPPD) form a disordered region.

Belongs to the DIMINUTO family. Highly expressed in the apical region and root tips and lower levels in immature and mature internodes and leaves.

The protein localises to the membrane. It carries out the reaction lathosterol + NADP(+) = 5alpha-cholesta-7,24-dien-3beta-ol + NADPH + H(+). In terms of biological role, plays a critical role in the general process of plant cell elongation. The chain is Delta(24)-sterol reductase (DIM) from Pisum sativum (Garden pea).